The following is a 422-amino-acid chain: Enolase (422 aa).

A Mg(2+)-binding site is contributed by Ser-41. Glu-163 is a binding site for (2R)-2-phosphoglycerate. The Proton donor role is filled by Glu-204. 3 residues coordinate Mg(2+): Asp-241, Glu-284, and Asp-311. Catalysis depends on Lys-336, which acts as the Proton acceptor. (2R)-2-phosphoglycerate-binding residues include Arg-365, Ser-366, and Lys-387.

The protein belongs to the enolase family. As to quaternary structure, homodimer. Component of the RNA degradosome, a multiprotein complex involved in RNA processing and mRNA degradation. It depends on Mg(2+) as a cofactor.

Its subcellular location is the cytoplasm. The protein resides in the secreted. It is found in the cell surface. The catalysed reaction is (2R)-2-phosphoglycerate = phosphoenolpyruvate + H2O. It functions in the pathway carbohydrate degradation; glycolysis; pyruvate from D-glyceraldehyde 3-phosphate: step 4/5. Its function is as follows. Catalyzes the reversible conversion of 2-phosphoglycerate (2-PG) into phosphoenolpyruvate (PEP). It is essential for the degradation of carbohydrates via glycolysis. This Legionella pneumophila subsp. pneumophila (strain Philadelphia 1 / ATCC 33152 / DSM 7513) protein is Enolase.